The chain runs to 504 residues: MTVPALASASGLLQVASLLGLLLLLLKAAQLYLRRQWLLKALQQFPSPPSHWLYGHSREFQEESELQPLLKRVEKYPSACARWLWGTRAMVLVYDPDYMKVVLARSEPKAPVLYRLLIPWIGCGLLLLNGQTWFQRRRMLTPAFHYDILKPYVGLMAKSVQVMLDKWEQLVAQDPRLEIVGPVSLMTLDTIMKCAFSHQGSAQTDGDSHSYIQAIWDLKNLFSIRTKSAFLQNDIIYRLSPEGRKNHRAARIAHQHTDRVIQLRKAQLQKQGEMENVRKKRHLDFLDILLLARMEKGNSLSDTDLRAEVDTFMFEGHDTTASGISWILYALASHPEHQQRCREEIQGLLGDGTSITWDHLDQMPYTTMCIKEALRLYPPVPGVSRELSKPITFPDGRSLPAGIILSLSVYSLHHNPQVWPNPEEFDPSRFAPGSARHSHAFMPFSGGSRNCIGKQFAMNEMKVAVALTLLRFELAPDPSRKPTVIPEVVLHSKNGIHLKLRKLP.

A run of 2 helical transmembrane segments spans residues Leu-6 to Leu-26 and Ala-110 to Gly-130. Cys-451 serves as a coordination point for heme.

Belongs to the cytochrome P450 family. Heme is required as a cofactor.

It localises to the endoplasmic reticulum membrane. The catalysed reaction is an omega-methyl-long-chain fatty acid + reduced [NADPH--hemoprotein reductase] + O2 = an omega-hydroxy-long-chain fatty acid + oxidized [NADPH--hemoprotein reductase] + H2O + H(+). Catalyzes the omega- and (omega-1)-hydroxylation of various fatty acids such as laurate and palmitate. Has no activity toward taurochenodeoxycholic acid. The chain is Cytochrome P450 4A25 (CYP4A25) from Sus scrofa (Pig).